A 152-amino-acid chain; its full sequence is 3-hydroxyacyl-[acyl-carrier-protein] dehydratase FabZ (152 aa).

Residue His-57 is part of the active site.

Belongs to the thioester dehydratase family. FabZ subfamily.

The protein localises to the cytoplasm. The enzyme catalyses a (3R)-hydroxyacyl-[ACP] = a (2E)-enoyl-[ACP] + H2O. Involved in unsaturated fatty acids biosynthesis. Catalyzes the dehydration of short chain beta-hydroxyacyl-ACPs and long chain saturated and unsaturated beta-hydroxyacyl-ACPs. The protein is 3-hydroxyacyl-[acyl-carrier-protein] dehydratase FabZ of Xanthomonas axonopodis pv. citri (strain 306).